The primary structure comprises 76 residues: Putative snRNP Sm-like protein (76 aa).

In terms of domain architecture, Sm spans 4–76 (RPLDVIHKSL…VLAISPTEEG (73 aa)).

This sequence belongs to the snRNP Sm proteins family.

The chain is Putative snRNP Sm-like protein from Pyrococcus furiosus (strain ATCC 43587 / DSM 3638 / JCM 8422 / Vc1).